We begin with the raw amino-acid sequence, 400 residues long: Phosphoglycerate kinase (400 aa).

Substrate contacts are provided by residues 21 to 23, R36, 59 to 62, R118, and R151; these read DFN and HLGR. ATP-binding positions include K201, G293, E324, and 353–356; that span reads GGDS.

It belongs to the phosphoglycerate kinase family. Monomer.

It is found in the cytoplasm. It catalyses the reaction (2R)-3-phosphoglycerate + ATP = (2R)-3-phospho-glyceroyl phosphate + ADP. It functions in the pathway carbohydrate degradation; glycolysis; pyruvate from D-glyceraldehyde 3-phosphate: step 2/5. The polypeptide is Phosphoglycerate kinase (Fervidobacterium nodosum (strain ATCC 35602 / DSM 5306 / Rt17-B1)).